The following is a 313-amino-acid chain: Ribosomal protein L11 methyltransferase (313 aa).

S-adenosyl-L-methionine contacts are provided by threonine 161, glycine 182, aspartate 204, and asparagine 247.

Belongs to the methyltransferase superfamily. PrmA family.

Its subcellular location is the cytoplasm. The catalysed reaction is L-lysyl-[protein] + 3 S-adenosyl-L-methionine = N(6),N(6),N(6)-trimethyl-L-lysyl-[protein] + 3 S-adenosyl-L-homocysteine + 3 H(+). In terms of biological role, methylates ribosomal protein L11. The protein is Ribosomal protein L11 methyltransferase of Alkaliphilus oremlandii (strain OhILAs) (Clostridium oremlandii (strain OhILAs)).